Here is a 115-residue protein sequence, read N- to C-terminus: U3-lycotoxin-Ls1c (115 aa).

The first 20 residues, 1–20 (MKFVLLFGVLLVTLFSYSSA), serve as a signal peptide directing secretion. Residues 21 to 44 (EMLDDFDQADEDELLSLIEKEEAR) constitute a propeptide that is removed on maturation. 4 cysteine pairs are disulfide-bonded: C48–C63, C55–C72, C62–C87, and C74–C85.

The protein belongs to the neurotoxin 19 (CSTX) family. 01 subfamily. As to expression, expressed by the venom gland.

The protein localises to the secreted. This chain is U3-lycotoxin-Ls1c, found in Lycosa singoriensis (Wolf spider).